Consider the following 101-residue polypeptide: MACPLEKALDVMVSTFHKYSGKEGDKFKLNKSELKELLTRELPSFLGKRTDEAAFQKLMSNLDSNRDNEVDFQEYCVFLSCIAMMCNEFFEGFPDKQPRKK.

A2 bears the N-acetylalanine mark. At K7 the chain carries N6-acetyllysine. EF-hand domains lie at M12–G47 and T50–M85. Positions 28 and 33 each coordinate Ca(2+). At K35 the chain carries N6-acetyllysine. Ca(2+)-binding residues include D63, N65, D67, E69, and E74.

The protein belongs to the S-100 family. As to quaternary structure, homodimer. Interacts with PPFIBP1 in a calcium-dependent mode. Interacts with PGLYRP1; this complex acts as a chemoattractant that promotes lymphocyte movement. Interacts with MYH9; this interaction increases cell motility. Interacts with Annexin 2/ANXA2. Interacts with TP53; this interaction promotes TP53 degradation. Interacts with CCR5. Interacts with FCGR3A; this interaction inhibits PKC-dependent phosphorylation of FCGR3A. As to expression, ubiquitously expressed.

It is found in the secreted. Its subcellular location is the nucleus. The protein localises to the cytoplasm. Its function is as follows. Calcium-binding protein that plays a role in various cellular processes including motility, angiogenesis, cell differentiation, apoptosis, and autophagy. Increases cell motility and invasiveness by interacting with non-muscle myosin heavy chain (NMMHC) IIA/MYH9. Mechanistically, promotes filament depolymerization and increases the amount of soluble myosin-IIA, resulting in the formation of stable protrusions facilitating chemotaxis. Also modulates the pro-apoptotic function of TP53 by binding to its C-terminal transactivation domain within the nucleus and reducing its protein levels. Within the extracellular space, stimulates cytokine production including granulocyte colony-stimulating factor and CCL24 from T-lymphocytes. In addition, stimulates T-lymphocyte chemotaxis by acting as a chemoattractant complex with PGLYRP1 that promotes lymphocyte migration via CCR5 and CXCR3 receptors. This chain is Protein S100-A4 (S100A4), found in Homo sapiens (Human).